Consider the following 461-residue polypeptide: D-phenylhydantoinase (461 aa).

Residues H59, H61, and K151 each coordinate a divalent metal cation. At K151 the chain carries N6-carboxylysine. Y156 serves as a coordination point for substrate. H182 and H239 together coordinate a divalent metal cation. Substrate is bound at residue S286. D313 serves as a coordination point for a divalent metal cation. Residue N335 participates in substrate binding.

The protein belongs to the metallo-dependent hydrolases superfamily. Hydantoinase/dihydropyrimidinase family. In terms of assembly, homotetramer. A divalent metal cation serves as cofactor. In terms of processing, carboxylation allows a single lysine to coordinate two divalent metal cations.

It carries out the reaction D-5-phenylhydantoin + H2O = N-carbamoyl-D-phenylglycine + H(+). Functionally, catalyzes the stereospecific hydrolysis of the cyclic amide bond of D-hydantoin derivatives with an aromatic side chains at the 5'-position. Has no activity on dihydropyrimidines. The physiological function is unknown. This Escherichia coli O127:H6 (strain E2348/69 / EPEC) protein is D-phenylhydantoinase.